Reading from the N-terminus, the 418-residue chain is Serine hydroxymethyltransferase (418 aa).

(6S)-5,6,7,8-tetrahydrofolate is bound by residues Leu121 and Gly125 to Leu127. Lys230 carries the post-translational modification N6-(pyridoxal phosphate)lysine. Ser356 to Phe358 lines the (6S)-5,6,7,8-tetrahydrofolate pocket.

The protein belongs to the SHMT family. In terms of assembly, homodimer. Pyridoxal 5'-phosphate serves as cofactor.

It localises to the cytoplasm. It catalyses the reaction (6R)-5,10-methylene-5,6,7,8-tetrahydrofolate + glycine + H2O = (6S)-5,6,7,8-tetrahydrofolate + L-serine. The protein operates within one-carbon metabolism; tetrahydrofolate interconversion. It participates in amino-acid biosynthesis; glycine biosynthesis; glycine from L-serine: step 1/1. Functionally, catalyzes the reversible interconversion of serine and glycine with tetrahydrofolate (THF) serving as the one-carbon carrier. This reaction serves as the major source of one-carbon groups required for the biosynthesis of purines, thymidylate, methionine, and other important biomolecules. Also exhibits THF-independent aldolase activity toward beta-hydroxyamino acids, producing glycine and aldehydes, via a retro-aldol mechanism. This is Serine hydroxymethyltransferase from Shewanella piezotolerans (strain WP3 / JCM 13877).